A 335-amino-acid chain; its full sequence is O(6)-methylguanine-induced apoptosis 2 (335 aa).

The segment covering 1–11 (MDNSTQKDQHS) has biased composition (basic and acidic residues). Residues 1–20 (MDNSTQKDQHSGKKYSRKAN) are disordered. STPGR repeat units lie at residues 68-75 (PGPGFYNV), 110-118 (PAANAYTIP), 149-156 (PAPNQYNA), 188-215 (GPAP…FKSK), 226-255 (GPGP…LNFS), 267-284 (LPGP…PRKH), and 308-317 (PGPATYRPEF). Position 73 is a phosphotyrosine (Tyr73).

The protein belongs to the STPG1 family.

Its subcellular location is the cytoplasm. It is found in the nucleus. Its function is as follows. May positively contribute to the induction of apoptosis triggered by O(6)-methylguanine. The polypeptide is O(6)-methylguanine-induced apoptosis 2 (STPG1) (Bos taurus (Bovine)).